A 428-amino-acid chain; its full sequence is Spliceosome RNA helicase DDX39B (428 aa).

A compositionally biased stretch (acidic residues) spans 1 to 19 (MAENDVDNELLDYEDDEVE). Residues 1-31 (MAENDVDNELLDYEDDEVETAAGGDGAEAPA) are disordered. Alanine 2 is modified (N-acetylalanine). Position 36 is an N6-acetyllysine; alternate (lysine 36). Residue lysine 36 forms a Glycyl lysine isopeptide (Lys-Gly) (interchain with G-Cter in SUMO2); alternate linkage. A phosphoserine mark is found at serine 38 and serine 41. Positions 45–73 (SGFRDFLLKPELLRAIVDCGFEHPSEVQH) match the Q motif motif. Residues 76 to 249 (IPQAILGMDV…RKFMQDPMEI (174 aa)) form the Helicase ATP-binding domain. 89–96 (AKSGMGKT) contacts ATP. At threonine 172 the chain carries Phosphothreonine. A DECD box motif is present at residues 196-199 (DECD). The 162-residue stretch at 261–422 (GLQQYYVKLK…ELPDEIDISS (162 aa)) folds into the Helicase C-terminal domain.

The protein belongs to the DEAD box helicase family. DECD subfamily. In terms of assembly, homodimer, and heterodimer with DDX39A. DDX39B interacts with the THO subcomplex to form the THO-DDX39B complex which multimerizes into a 28-subunit tetrameric assembly. Component of the transcription/export (TREX) complex at least composed of ALYREF/THOC4, DDX39B, SARNP/CIP29, CHTOP and the THO subcomplex; in the complex interacts with THOC2. THOC1-THOC2-THOC3-DDX39B subcomplex is sufficient for the interaction with export factor NXF1-NXT1. TREX seems to have a dynamic structure involving ATP-dependent remodeling. Within the TREX complex bridges ALYREF/THOC4 and the THO subcomplex, and, in a ATP-dependent manner, ALYREF/THOC4 and SARNP/CIP29. Component of the spliceosome. Interacts directly with U2AF2. Interacts with RBM8A, RNPS1 and SRRM1, FYTTD1/UIF, THOC1, MX1 and POLDIP3. Interacts with LUZP4. Interacts with SARNP/CIP29 (via the C-terminal domain); the interaction is direct and facilitates RNA binding of DDX39B. As to quaternary structure, (Microbial infection) Interacts with human cytomegalovirus/HHV-5 protein UL69.

The protein resides in the nucleus. It localises to the nucleus speckle. It is found in the cytoplasm. It carries out the reaction ATP + H2O = ADP + phosphate + H(+). Functionally, involved in nuclear export of spliced and unspliced mRNA. Component of the TREX complex which is thought to couple mRNA transcription, processing and nuclear export, and specifically associates with spliced mRNA and not with unspliced pre-mRNA. The TREX complex is recruited to spliced mRNAs by a transcription-independent mechanism, binds to mRNA upstream of the exon-junction complex (EJC) and is recruited in a splicing- and cap-dependent manner to a region near the 5' end of the mRNA where it functions in mRNA export to the cytoplasm via the TAP/NXF1 pathway. The THOC1-THOC2-THOC3 core complex alone is sufficient to promote ATPase activity of DDX39B; in the complex THOC2 is the only component that directly interacts with DDX39B. Associates with SARNP/CIP29, which facilitates RNA binding of DDX39B and likely plays a role in mRNA export. May undergo several rounds of ATP hydrolysis during assembly of TREX to drive subsequent loading of components such as ALYREF/THOC4 and CHTOP onto mRNA. Also associates with pre-mRNA independent of ALYREF/THOC4. Involved in the nuclear export of intronless mRNA; the ATP-bound form is proposed to recruit export adapter ALYREF/THOC4 to intronless mRNA; its ATPase activity is cooperatively stimulated by RNA and ALYREF/THOC4 and ATP hydrolysis is thought to trigger the dissociation from RNA to allow the association of ALYREF/THOC4 and the NXF1-NXT1 heterodimer. Involved in transcription elongation and genome stability. Splice factor that is required for the first ATP-dependent step in spliceosome assembly and for the interaction of U2 snRNP with the branchpoint. Has both RNA-stimulated ATP binding/hydrolysis activity and ATP-dependent RNA unwinding activity. Even with the stimulation of RNA, the ATPase activity is weak. Can only hydrolyze ATP but not other NTPs. The RNA stimulation of ATPase activity does not have a strong preference for the sequence and length of the RNA. However, ssRNA stimulates the ATPase activity much more strongly than dsRNA. Can unwind 5' or 3' overhangs or blunt end RNA duplexes in vitro. The ATPase and helicase activities are not influenced by U2AF2; the effect of ALYREF/THOC4 is reported conflictingly with [PubMed:23299939] reporting a stimulatory effect. Its function is as follows. (Microbial infection) The TREX complex is essential for the export of Kaposi's sarcoma-associated herpesvirus (KSHV) intronless mRNAs and infectious virus production. In Homo sapiens (Human), this protein is Spliceosome RNA helicase DDX39B.